The primary structure comprises 515 residues: ATP synthase subunit alpha (515 aa).

ATP is bound at residue 171–178; sequence GDRQTGKT.

Belongs to the ATPase alpha/beta chains family. As to quaternary structure, F-type ATPases have 2 components, CF(1) - the catalytic core - and CF(0) - the membrane proton channel. CF(1) has five subunits: alpha(3), beta(3), gamma(1), delta(1), epsilon(1). CF(0) has three main subunits: a(1), b(2) and c(9-12). The alpha and beta chains form an alternating ring which encloses part of the gamma chain. CF(1) is attached to CF(0) by a central stalk formed by the gamma and epsilon chains, while a peripheral stalk is formed by the delta and b chains.

The protein resides in the cell inner membrane. The catalysed reaction is ATP + H2O + 4 H(+)(in) = ADP + phosphate + 5 H(+)(out). In terms of biological role, produces ATP from ADP in the presence of a proton gradient across the membrane. The alpha chain is a regulatory subunit. The protein is ATP synthase subunit alpha of Coxiella burnetii (strain CbuK_Q154) (Coxiella burnetii (strain Q154)).